Consider the following 188-residue polypeptide: Protein YecM (188 aa).

The protein to H.influenzae HI_1582/HI_1581.

The sequence is that of Protein YecM (yecM) from Escherichia coli (strain K12).